We begin with the raw amino-acid sequence, 244 residues long: tRNA pseudouridine synthase A (244 aa).

The active-site Nucleophile is Asp-52. Tyr-110 serves as a coordination point for substrate.

It belongs to the tRNA pseudouridine synthase TruA family. In terms of assembly, homodimer.

The catalysed reaction is uridine(38/39/40) in tRNA = pseudouridine(38/39/40) in tRNA. Its function is as follows. Formation of pseudouridine at positions 38, 39 and 40 in the anticodon stem and loop of transfer RNAs. The sequence is that of tRNA pseudouridine synthase A from Acetivibrio thermocellus (strain ATCC 27405 / DSM 1237 / JCM 9322 / NBRC 103400 / NCIMB 10682 / NRRL B-4536 / VPI 7372) (Clostridium thermocellum).